Reading from the N-terminus, the 68-residue chain is uncharacterized protein (68 aa).

The disordered stretch occupies residues methionine 1–lysine 68. Residues serine 9 to lysine 34 show a composition bias toward basic and acidic residues. Residues aspartate 42 to glutamate 51 show a composition bias toward acidic residues.

This is an uncharacterized protein from Dictyostelium discoideum (Social amoeba).